We begin with the raw amino-acid sequence, 288 residues long: Pantothenate synthetase (288 aa).

Residue 35–42 (MGALHDGH) participates in ATP binding. The active-site Proton donor is the histidine 42. Glutamine 66 contacts (R)-pantoate. Glutamine 66 contacts beta-alanine. 152–155 (GEKD) is an ATP binding site. (R)-pantoate is bound at residue glutamine 158. Residues glycine 181 and 189–192 (LSSR) contribute to the ATP site.

Belongs to the pantothenate synthetase family. As to quaternary structure, homodimer.

The protein localises to the cytoplasm. It catalyses the reaction (R)-pantoate + beta-alanine + ATP = (R)-pantothenate + AMP + diphosphate + H(+). It participates in cofactor biosynthesis; (R)-pantothenate biosynthesis; (R)-pantothenate from (R)-pantoate and beta-alanine: step 1/1. Functionally, catalyzes the condensation of pantoate with beta-alanine in an ATP-dependent reaction via a pantoyl-adenylate intermediate. The protein is Pantothenate synthetase of Maricaulis maris (strain MCS10) (Caulobacter maris).